The sequence spans 450 residues: Benzene 1,2-dioxygenase subunit alpha (450 aa).

The Rieske domain maps to leucine 56 to alanine 163. Residues cysteine 96, histidine 98, cysteine 116, and histidine 119 each contribute to the [2Fe-2S] cluster site. Residues histidine 222 and histidine 228 each coordinate Fe cation.

The protein belongs to the bacterial ring-hydroxylating dioxygenase alpha subunit family. As to quaternary structure, this dioxygenase system consists of four proteins: the two subunits of the hydroxylase component (BedC1 and BedC2), a ferredoxin (BedB) and a ferredoxin reductase (BedA). Requires [2Fe-2S] cluster as cofactor. The cofactor is Fe cation.

It carries out the reaction benzene + NADH + O2 + H(+) = cis-1,2-dihydrobenzene-1,2-diol + NAD(+). The protein operates within aromatic compound metabolism; benzene degradation; catechol from benzene: step 1/2. In Pseudomonas putida (Arthrobacter siderocapsulatus), this protein is Benzene 1,2-dioxygenase subunit alpha (bedC1).